The primary structure comprises 396 residues: Ribosomal RNA large subunit methyltransferase G (396 aa).

This sequence belongs to the methyltransferase superfamily. RlmG family.

It localises to the cytoplasm. The catalysed reaction is guanosine(1835) in 23S rRNA + S-adenosyl-L-methionine = N(2)-methylguanosine(1835) in 23S rRNA + S-adenosyl-L-homocysteine + H(+). In terms of biological role, specifically methylates the guanine in position 1835 (m2G1835) of 23S rRNA. The sequence is that of Ribosomal RNA large subunit methyltransferase G from Yersinia enterocolitica serotype O:8 / biotype 1B (strain NCTC 13174 / 8081).